The sequence spans 349 residues: SUMO-activating enzyme subunit 1 (349 aa).

Residue methionine 1 is modified to N-acetylmethionine. Residue valine 2 is modified to N-acetylvaline; in SUMO-activating enzyme subunit 1, N-terminally processed. Serine 15 carries the post-translational modification Phosphoserine. Lysine 201 carries the post-translational modification N6-acetyllysine.

The protein belongs to the ubiquitin-activating E1 family. In terms of assembly, heterodimer of SAE1 and UBA2/SAE2. The heterodimer corresponds to the two domains that are encoded on a single polypeptide chain in ubiquitin-activating enzyme E1. Interacts with UBE2I.

It localises to the nucleus. Its pathway is protein modification; protein sumoylation. Its function is as follows. The heterodimer acts as an E1 ligase for SUMO1, SUMO2, SUMO3, and probably SUMO4. It mediates ATP-dependent activation of SUMO proteins followed by formation of a thioester bond between a SUMO protein and a conserved active site cysteine residue on UBA2/SAE2. This is SUMO-activating enzyme subunit 1 (Sae1) from Rattus norvegicus (Rat).